The chain runs to 309 residues: Putative lipid kinase YtlR (309 aa).

A DAGKc domain is found at 1–134; it reads MSHWFFIINP…FHLGSVNFLQ (134 aa). Residues 9 to 13, threonine 40, and 69 to 75 each bind ATP; these read NPTAG and GDGTMHE. 3 residues coordinate Mg(2+): asparagine 229, glutamate 232, and threonine 234. Glutamate 289 serves as the catalytic Proton acceptor.

The protein belongs to the diacylglycerol/lipid kinase family. Mg(2+) is required as a cofactor.

Functionally, may catalyze the ATP-dependent phosphorylation of lipids other than diacylglycerol (DAG). In fact, is not able to exhibit diacylglycerol kinase activity in vitro. The chain is Putative lipid kinase YtlR (ytlR) from Bacillus subtilis (strain 168).